The following is a 335-amino-acid chain: Beta-ketoacyl-[acyl-carrier-protein] synthase III (335 aa).

Active-site residues include Cys-119 and His-261. The interval 262-266 (QANQR) is ACP-binding. Asn-291 is a catalytic residue.

This sequence belongs to the thiolase-like superfamily. FabH family. Homodimer.

Its subcellular location is the cytoplasm. The enzyme catalyses malonyl-[ACP] + acetyl-CoA + H(+) = 3-oxobutanoyl-[ACP] + CO2 + CoA. It participates in lipid metabolism; fatty acid biosynthesis. Its function is as follows. Catalyzes the condensation reaction of fatty acid synthesis by the addition to an acyl acceptor of two carbons from malonyl-ACP. Catalyzes the first condensation reaction which initiates fatty acid synthesis and may therefore play a role in governing the total rate of fatty acid production. Possesses both acetoacetyl-ACP synthase and acetyl transacylase activities. Its substrate specificity determines the biosynthesis of branched-chain and/or straight-chain of fatty acids. The protein is Beta-ketoacyl-[acyl-carrier-protein] synthase III of Prochlorococcus marinus (strain MIT 9515).